The chain runs to 486 residues: MVALDVLGITDSDAPVYRQKQEADTLVLGTIHPFRKAHRSVLGKLAQEFRLVTSDRRSWKILLFGVLNVVCTGCLLMWCSSTNSMALTAYTYLTIFDLFSLITCLLSLWVTMKKPSQIYSFGFQRFEVLAVFSSTVLVQLGSLFILKESVERFVEQPEVHTGRLLVGTFVALFFNLLTLLSVKNKPFVFVSEAASTSWLQEHVADLSRSLCGLIPALSSFLLPRMNPFVLINLAGAFALGITYMLIEINNYNAMDTASAVAIALMTFGTMYPMSVYSGKVLLQTTPSHVIGQLDKLLREVSTLDGVLEVRNEHFWTIGFGSLAGSVHVRIRRDADEQMVLAHVWNRLSALVSALTVHVFKDEWSRASLSSGVLPSAPLSLSEYVTAAAVFPAAPSRAQGSEPTPATSTPAKPSSPPPEFSFHTPGRHVQPVVFQTAHPHRPLYGGLQGPGVRLGLGPRGPTLQAYRTLSAAPHTYTSGTYTGPPRP.

Residues 1-60 (MVALDVLGITDSDAPVYRQKQEADTLVLGTIHPFRKAHRSVLGKLAQEFRLVTSDRRSWK) lie on the Cytoplasmic side of the membrane. Residues 61-81 (ILLFGVLNVVCTGCLLMWCSS) traverse the membrane as a helical segment. Topologically, residues 82 to 91 (TNSMALTAYT) are extracellular. A helical transmembrane segment spans residues 92 to 112 (YLTIFDLFSLITCLLSLWVTM). Residues 113 to 125 (KKPSQIYSFGFQR) lie on the Cytoplasmic side of the membrane. Residues 126 to 146 (FEVLAVFSSTVLVQLGSLFIL) traverse the membrane as a helical segment. Residues 147–161 (KESVERFVEQPEVHT) are Extracellular-facing. A helical membrane pass occupies residues 162 to 182 (GRLLVGTFVALFFNLLTLLSV). Residues 183 to 227 (KNKPFVFVSEAASTSWLQEHVADLSRSLCGLIPALSSFLLPRMNP) lie on the Cytoplasmic side of the membrane. Residues 228-248 (FVLINLAGAFALGITYMLIEI) form a helical membrane-spanning segment. The Extracellular segment spans residues 249–255 (NNYNAMD). A helical membrane pass occupies residues 256-276 (TASAVAIALMTFGTMYPMSVY). Residues 277–486 (SGKVLLQTTP…SGTYTGPPRP (210 aa)) lie on the Cytoplasmic side of the membrane. Low complexity predominate over residues 394–411 (PSRAQGSEPTPATSTPAK). The segment at 394-425 (PSRAQGSEPTPATSTPAKPSSPPPEFSFHTPG) is disordered.

This sequence belongs to the cation diffusion facilitator (CDF) transporter (TC 2.A.4) family. SLC30A subfamily. Heterodimer with SLC30A5; form a functional zinc ion transmembrane transporter.

The protein localises to the golgi apparatus. The protein resides in the trans-Golgi network membrane. Has probably no intrinsic transporter activity but together with SLC30A5 forms a functional zinc ion:proton antiporter heterodimer, mediating zinc entry into the lumen of organelles along the secretory pathway. As part of that zinc ion:proton antiporter, contributes to zinc ion homeostasis within the early secretory pathway and regulates the activation and folding of enzymes like alkaline phosphatases and enzymes involved in phosphatidylinositol glycan anchor biosynthesis. This Danio rerio (Zebrafish) protein is Zinc transporter 6 (slc30a6).